The following is a 498-amino-acid chain: NAD(P)H-quinone oxidoreductase chain 4, chloroplastic (498 aa).

14 consecutive transmembrane segments (helical) span residues 4–24, 37–57, 87–107, 111–131, 134–154, 167–187, 207–227, 242–262, 274–294, 305–325, 331–351, 386–406, 417–437, and 461–481; these read LPWLTLIVLFPFSASFLIPLL, LGICALEFLLITFTFCCQFHL, MGLILLTGFITTLAILAAWPV, VRLFYFLMLAMYSGQIGLFAS, ILLFFFMWELELIPVYLLLSM, FLLYTAGGSIFLLVGSLTMGL, IAVETALYFSFLIAYAVKLPI, HYSTCMLLAGILLKMGGYGLI, FLFSPLLVTMGAVQIAYASLI, IAYSSVSHMGFVIIGISSITD, AILQMISHGLIGAALFFLAGI, LALPGMSSFVAEFLIFLGIVT, IILFIGAIGVILTPIYLLSML, and IFISVFILLPILGIGIYPNLV.

This sequence belongs to the complex I subunit 4 family.

The protein resides in the plastid. It is found in the chloroplast thylakoid membrane. It catalyses the reaction a plastoquinone + NADH + (n+1) H(+)(in) = a plastoquinol + NAD(+) + n H(+)(out). The catalysed reaction is a plastoquinone + NADPH + (n+1) H(+)(in) = a plastoquinol + NADP(+) + n H(+)(out). The protein is NAD(P)H-quinone oxidoreductase chain 4, chloroplastic of Psilotum nudum (Whisk fern).